An 828-amino-acid polypeptide reads, in one-letter code: Periplasmic nitrate reductase (828 aa).

The segment at residues 1-31 (MKLSRRHFMKANAVAAAAAVAGITIPIAVRA) is a signal peptide (tat-type signal). The 57-residue stretch at 39–95 (IHWDKAPCRFCGVGCGVLVGTQNGRIVASQGDPEAPVNRGLNCIKGYFLPKIMYGQD) folds into the 4Fe-4S Mo/W bis-MGD-type domain. Positions 46, 49, 53, and 81 each coordinate [4Fe-4S] cluster. Mo-bis(molybdopterin guanine dinucleotide) is bound by residues Lys83, Gln150, Asn175, Cys179, 212–219 (WGSNMAEM), 243–247 (STYQH), 262–264 (QTD), Met372, Gln376, Asn482, 508–509 (SD), Lys531, Asp558, and 718–727 (TGRVLEHWHT). Phe794 serves as a coordination point for substrate. Mo-bis(molybdopterin guanine dinucleotide) is bound by residues Asn802 and Lys819.

It belongs to the prokaryotic molybdopterin-containing oxidoreductase family. NasA/NapA/NarB subfamily. In terms of assembly, component of the periplasmic nitrate reductase NapAB complex composed of NapA and NapB. [4Fe-4S] cluster serves as cofactor. Mo-bis(molybdopterin guanine dinucleotide) is required as a cofactor. Post-translationally, predicted to be exported by the Tat system. The position of the signal peptide cleavage has not been experimentally proven.

The protein resides in the periplasm. It carries out the reaction 2 Fe(II)-[cytochrome] + nitrate + 2 H(+) = 2 Fe(III)-[cytochrome] + nitrite + H2O. Its function is as follows. Catalytic subunit of the periplasmic nitrate reductase complex NapAB. Receives electrons from NapB and catalyzes the reduction of nitrate to nitrite. This is Periplasmic nitrate reductase from Pectobacterium atrosepticum (strain SCRI 1043 / ATCC BAA-672) (Erwinia carotovora subsp. atroseptica).